The primary structure comprises 361 residues: MDSLTLFFTGALVAVGIYWFLCVLGPAERKGKRAVDLSGGSISAEKVQDNYKQYWSFFRRPKEIETAEKVPDFVDTFYNLVTDIYEWGWGQSFHFSPSIPGKSHKDATRLHEEMAVDLIQVKPGQKILDVGCGVGGPMRAIASHSRANVVGITINEYQVNRARLHNKKAGLDALCEVVCGNFLQMPFDDNSFDGAYSIEATCHAPKLEEVYAEIYRVLKPGSMYVSYEWVTTEKFKAEDDEHVEVIQGIERGDALPGLRAYVDIAETAKKVGFEIVKEKDLASPPAEPWWTRLKMGRLAYWRNHIVVQILSAVGVAPKGTVDVHEMLFKTADYLTRGGETGIFSPMHMILCRKPESPEESS.

The protein belongs to the class I-like SAM-binding methyltransferase superfamily. Erg6/SMT family.

The catalysed reaction is 24-methylidenelophenol + S-adenosyl-L-methionine = (Z)-24-ethylidenelophenol + S-adenosyl-L-homocysteine + H(+). Its pathway is steroid biosynthesis; sterol biosynthesis. Functionally, catalyzes the methyl transfer from S-adenosyl-methionine to the methylene group of 24-methylene lophenol to form 24-ethylidene lophenol. In Arabidopsis thaliana (Mouse-ear cress), this protein is 24-methylenesterol C-methyltransferase 2 (SMT2).